The primary structure comprises 347 residues: Peptidoglycan recognition protein 3 (347 aa).

The N-terminal stretch at 1 to 26 (MLVSWDHPKMLPRLLGFLALSLLACG) is a signal peptide. 2 N-acetylmuramoyl-L-alanine amidase domains span residues 77–185 (LQSQ…KACP) and 206–328 (PAKF…VSNI). Residue Asn120 is glycosylated (N-linked (GlcNAc...) asparagine). Disulfide bonds link Cys184–Cys306, Cys200–Cys244, and Cys220–Cys226. Peptidoglycan contacts are provided by His237 and Tyr248. Positions 270 to 275 (HTYGYN) are interaction with murein.

Belongs to the N-acetylmuramoyl-L-alanine amidase 2 family. In terms of assembly, monomer. Homodimer; disulfide-linked. Heterodimer with PGLYRP4; disulfide-linked. As to expression, detected in lung, spleen and stomach, and at low levels in eye, heart, thymus and testis.

It localises to the secreted. Pattern receptor that binds to murein peptidoglycans (PGN) of Gram-positive bacteria. Has bactericidal activity towards Gram-positive bacteria. May kill Gram-positive bacteria by interfering with peptidoglycan biosynthesis. Also binds to Gram-negative bacteria, and has bacteriostatic activity towards Gram-negative bacteria. Plays a role in innate immunity. This Mus musculus (Mouse) protein is Peptidoglycan recognition protein 3 (Pglyrp3).